The chain runs to 130 residues: Glycine cleavage system H protein (130 aa).

Positions T24–K106 constitute a Lipoyl-binding domain. Residue K65 is modified to N6-lipoyllysine.

Belongs to the GcvH family. In terms of assembly, the glycine cleavage system is composed of four proteins: P, T, L and H. The cofactor is (R)-lipoate.

The glycine cleavage system catalyzes the degradation of glycine. The H protein shuttles the methylamine group of glycine from the P protein to the T protein. The protein is Glycine cleavage system H protein of Marinobacter nauticus (strain ATCC 700491 / DSM 11845 / VT8) (Marinobacter aquaeolei).